The following is a 302-amino-acid chain: Putative fructose-bisphosphate aldolase (302 aa).

Aspartate 86 acts as the Proton donor in catalysis. Histidine 87, aspartate 116, glutamate 146, and histidine 192 together coordinate Zn(2+). Glycine 193 contacts dihydroxyacetone phosphate. Histidine 223 is a binding site for Zn(2+). Dihydroxyacetone phosphate contacts are provided by residues 224-226 (GAD) and 245-248 (NVNR).

This sequence belongs to the class II fructose-bisphosphate aldolase family. As to quaternary structure, homodimer. It depends on Zn(2+) as a cofactor.

It carries out the reaction beta-D-fructose 1,6-bisphosphate = D-glyceraldehyde 3-phosphate + dihydroxyacetone phosphate. It functions in the pathway carbohydrate degradation; glycolysis; D-glyceraldehyde 3-phosphate and glycerone phosphate from D-glucose: step 4/4. Catalyzes the aldol condensation of dihydroxyacetone phosphate (DHAP or glycerone-phosphate) with glyceraldehyde 3-phosphate (G3P) to form fructose 1,6-bisphosphate (FBP) in gluconeogenesis and the reverse reaction in glycolysis. The sequence is that of Putative fructose-bisphosphate aldolase from Coccidioides immitis (strain RS) (Valley fever fungus).